The chain runs to 270 residues: Phosphatidylglycerol--prolipoprotein diacylglyceryl transferase (270 aa).

The next 4 helical transmembrane spans lie at 19–39 (FPVY…LWLA), 56–76 (LVLI…VIFE), 92–112 (QGGL…ILFA), and 116–136 (GVSF…GQAI). Arg-138 is an a 1,2-diacyl-sn-glycero-3-phospho-(1'-sn-glycerol) binding site. The next 3 helical transmembrane spans lie at 178–198 (HPTF…LLAL), 206–226 (GELF…VEGL), and 236–256 (LRIA…FIIV).

It belongs to the Lgt family.

The protein resides in the cell membrane. It carries out the reaction L-cysteinyl-[prolipoprotein] + a 1,2-diacyl-sn-glycero-3-phospho-(1'-sn-glycerol) = an S-1,2-diacyl-sn-glyceryl-L-cysteinyl-[prolipoprotein] + sn-glycerol 1-phosphate + H(+). It functions in the pathway protein modification; lipoprotein biosynthesis (diacylglyceryl transfer). Catalyzes the transfer of the diacylglyceryl group from phosphatidylglycerol to the sulfhydryl group of the N-terminal cysteine of a prolipoprotein, the first step in the formation of mature lipoproteins. The polypeptide is Phosphatidylglycerol--prolipoprotein diacylglyceryl transferase (Bacillus thuringiensis subsp. konkukian (strain 97-27)).